The chain runs to 149 residues: Thioredoxin-like protein 4B (149 aa).

This sequence belongs to the DIM1 family. Homodimer. Interacts with the U5-102 kDa protein subunit of the spliceosome.

It is found in the nucleus. Functionally, essential role in pre-mRNA splicing. Required in cell cycle progression for S/G(2) transition. The chain is Thioredoxin-like protein 4B (Txnl4b) from Mus musculus (Mouse).